A 574-amino-acid chain; its full sequence is Cell division cycle 7-related protein kinase (574 aa).

Residue Ser-27 is modified to Phosphoserine. The Protein kinase domain occupies 58 to 574 (FKIEDKIGEG…LHPFFKDMSL (517 aa)). ATP contacts are provided by residues 64–72 (IGEGTFSSV) and Lys-90. Asp-177 acts as the Proton acceptor in catalysis. Lys-268 participates in a covalent cross-link: Glycyl lysine isopeptide (Lys-Gly) (interchain with G-Cter in SUMO2). Thr-503 carries the phosphothreonine modification.

This sequence belongs to the protein kinase superfamily. Ser/Thr protein kinase family. CDC7 subfamily. In terms of assembly, forms a complex with either DBF4/DBF4A or DBF4B, leading to the activation of the kinase activity. Interacts with CLASPIN (via the acidic patch); the interaction is required for phosphorylation of MCM proteins and CLASPIN. It depends on Mg(2+) as a cofactor.

The protein resides in the nucleus. The enzyme catalyses L-seryl-[protein] + ATP = O-phospho-L-seryl-[protein] + ADP + H(+). The catalysed reaction is L-threonyl-[protein] + ATP = O-phospho-L-threonyl-[protein] + ADP + H(+). In terms of biological role, kinase involved in initiation of DNA replication. Phosphorylates critical substrates that regulate the G1/S phase transition and initiation of DNA replication, such as MCM proteins and CLASPIN. In Homo sapiens (Human), this protein is Cell division cycle 7-related protein kinase.